Reading from the N-terminus, the 320-residue chain is tRNA dimethylallyltransferase (320 aa).

16-23 contacts ATP; sequence GPTASGKT. Residue 18–23 coordinates substrate; sequence TASGKT. Interaction with substrate tRNA stretches follow at residues 41–44, 165–169, and 247–252; these read DSAL, QRIQR, and RCVGYR.

The protein belongs to the IPP transferase family. Monomer. Mg(2+) serves as cofactor.

The enzyme catalyses adenosine(37) in tRNA + dimethylallyl diphosphate = N(6)-dimethylallyladenosine(37) in tRNA + diphosphate. Catalyzes the transfer of a dimethylallyl group onto the adenine at position 37 in tRNAs that read codons beginning with uridine, leading to the formation of N6-(dimethylallyl)adenosine (i(6)A). The protein is tRNA dimethylallyltransferase of Azoarcus sp. (strain BH72).